The primary structure comprises 176 residues: Phosphopantetheine adenylyltransferase (176 aa).

Ser-8 lines the substrate pocket. Residues 8–9 (SF) and His-16 contribute to the ATP site. Positions 40, 72, and 86 each coordinate substrate. Residues 87-89 (GLR), Glu-97, and 122-128 (YSFLSSS) contribute to the ATP site.

Belongs to the bacterial CoaD family. As to quaternary structure, homohexamer. The cofactor is Mg(2+).

It localises to the cytoplasm. The enzyme catalyses (R)-4'-phosphopantetheine + ATP + H(+) = 3'-dephospho-CoA + diphosphate. Its pathway is cofactor biosynthesis; coenzyme A biosynthesis; CoA from (R)-pantothenate: step 4/5. Its function is as follows. Reversibly transfers an adenylyl group from ATP to 4'-phosphopantetheine, yielding dephospho-CoA (dPCoA) and pyrophosphate. In Acaryochloris marina (strain MBIC 11017), this protein is Phosphopantetheine adenylyltransferase.